Reading from the N-terminus, the 440-residue chain is Xaa-Pro dipeptidase (440 aa).

Mn(2+)-binding residues include D244, D255, H335, E380, and E419.

Belongs to the peptidase M24B family. Bacterial-type prolidase subfamily. The cofactor is Mn(2+).

The catalysed reaction is Xaa-L-Pro dipeptide + H2O = an L-alpha-amino acid + L-proline. In terms of biological role, splits dipeptides with a prolyl residue in the C-terminal position. The sequence is that of Xaa-Pro dipeptidase from Shewanella putrefaciens (strain CN-32 / ATCC BAA-453).